A 42-amino-acid polypeptide reads, in one-letter code: Serine protease inhibitor 8 (42 aa).

The protein belongs to the protease inhibitor I3 (leguminous Kunitz-type inhibitor) family. As to expression, cortex of potato tuber.

In terms of biological role, potent inhibitor of animal pancreatic trypsin (serine protease). The polypeptide is Serine protease inhibitor 8 (Solanum tuberosum (Potato)).